We begin with the raw amino-acid sequence, 535 residues long: EGF domain-specific O-linked N-acetylglucosamine transferase (535 aa).

An N-terminal signal peptide occupies residues Met-1–Ala-16. Residues Asn-22 and Asn-271 are each glycosylated (N-linked (GlcNAc...) asparagine). Residues Asp-303–Asp-305 carry the Required for optimal activity motif. N-linked (GlcNAc...) asparagine glycans are attached at residues Asn-362 and Asn-501.

The protein belongs to the glycosyltransferase 61 family.

Its subcellular location is the endoplasmic reticulum lumen. It catalyses the reaction L-seryl-[protein] + UDP-N-acetyl-alpha-D-glucosamine = 3-O-(N-acetyl-beta-D-glucosaminyl)-L-seryl-[protein] + UDP + H(+). The catalysed reaction is L-threonyl-[protein] + UDP-N-acetyl-alpha-D-glucosamine = 3-O-(N-acetyl-beta-D-glucosaminyl)-L-threonyl-[protein] + UDP + H(+). Its function is as follows. Catalyzes the transfer of a single N-acetylglucosamine from UDP-GlcNAc to a serine or threonine residue in extracellular proteins resulting in their modification with a beta-linked N-acetylglucosamine (O-GlcNAc). Specifically glycosylates the Thr residue located between the fifth and sixth conserved cysteines of folded EGF-like domains. This is EGF domain-specific O-linked N-acetylglucosamine transferase (EOGT) from Gallus gallus (Chicken).